We begin with the raw amino-acid sequence, 826 residues long: Capsid-associated protein Vp91 (826 aa).

The N-terminal stretch at 1–18 (MSDVVLLVLAIIFIIIFV) is a signal peptide. The segment at 147-196 (CVPINPCDTRAPGLYAMDEHLLDALVHSQHLDKDYTINAHLQHPTLYLRC) adopts a C2HC BV-type zinc-finger fold. 2 disulfide bridges follow: cysteine 207–cysteine 220 and cysteine 260–cysteine 273. Residue asparagine 210 is glycosylated (N-linked (GlcNAc...) asparagine; by host). Residues 223-281 (NELCQGRPDGYVLDYFPETLLVNEFVECYESKHVVKQCPEQHVFDRQLMTCVQAHPCAF) enclose the Chitin-binding type-2 domain. 6 N-linked (GlcNAc...) asparagine; by host glycosylation sites follow: asparagine 333, asparagine 371, asparagine 413, asparagine 510, asparagine 520, and asparagine 609. The tract at residues 651-679 (GDGDHWGPDLPPPVQPDSEPDESEPEPEV) is disordered. Acidic residues predominate over residues 668-677 (SEPDESEPEP). Asparagine 722 carries N-linked (GlcNAc...) asparagine; by host glycosylation.

Its subcellular location is the virion. In terms of biological role, probable capsid-associated protein. The polypeptide is Capsid-associated protein Vp91 (Epiphyas postvittana nucleopolyhedrovirus (EppoMNPV)).